The primary structure comprises 162 residues: MPSFDVVSELNLMEVENAFNQARKEILQRFDFKGTSTDLERDKDENVVVKAGSEGRAEAALQVLMEKLAKRGVPLEGLDPQKLEPASGGSVRQLVKLKRGLKQEDAKRIVALMKESGLKVQAAIQGEAVRISGKKKDDLQAAMQAIRTGGLGVPLQFQNFRE.

It belongs to the YajQ family.

Its function is as follows. Nucleotide-binding protein. The sequence is that of Nucleotide-binding protein Anae109_0095 from Anaeromyxobacter sp. (strain Fw109-5).